The chain runs to 476 residues: Cytochrome c oxidase subunit 1 (476 aa).

Residues 19 to 39 form a helical membrane-spanning segment; the sequence is LYYLWFSFLFGTYGFLLSVIL. Glutamate 42 is a binding site for Ca(2+). 8 consecutive transmembrane segments (helical) span residues 61 to 81, 105 to 125, 144 to 164, 194 to 214, 240 to 260, 278 to 298, 309 to 329, and 345 to 365; these read MIFT…GLFG, ISLL…AAEF, LSPV…IASI, IIIT…GVLM, LFWF…FGVI, MILA…HHMY, FFTS…FNWL, and LLCL…VILG. Residue histidine 66 coordinates Fe(II)-heme a. Cu cation is bound at residue histidine 246. Residues 246-250 constitute a cross-link (1'-histidyl-3'-tyrosine (His-Tyr)); sequence HPEVY. Tyrosine 250 is an O2 binding site. Residues histidine 295 and histidine 296 each contribute to the Cu cation site. The Mg(2+) site is built by histidine 374 and aspartate 375. 2 consecutive transmembrane segments (helical) span residues 379–399 and 415–435; these read VIAH…FTCV and TLIV…FLPM. Histidine 382 lines the heme a3 pocket. Histidine 384 is a binding site for Fe(II)-heme a. Proline 448 serves as a coordination point for Ca(2+). Residues 455 to 475 form a helical membrane-spanning segment; the sequence is NGWNMICSIGSTMTLFGLLIF.

The protein belongs to the heme-copper respiratory oxidase family. Component of the cytochrome c oxidase (complex IV, CIV), a multisubunit enzyme composed of a catalytic core of 3 subunits and several supernumerary subunits. The complex exists as a monomer or a dimer and forms supercomplexes (SCs) in the inner mitochondrial membrane with ubiquinol-cytochrome c oxidoreductase (cytochrome b-c1 complex, complex III, CIII). Requires heme as cofactor. The cofactor is Cu cation.

It localises to the mitochondrion inner membrane. The catalysed reaction is 4 Fe(II)-[cytochrome c] + O2 + 8 H(+)(in) = 4 Fe(III)-[cytochrome c] + 2 H2O + 4 H(+)(out). It participates in energy metabolism; oxidative phosphorylation. Component of the cytochrome c oxidase, the last enzyme in the mitochondrial electron transport chain which drives oxidative phosphorylation. The respiratory chain contains 3 multisubunit complexes succinate dehydrogenase (complex II, CII), ubiquinol-cytochrome c oxidoreductase (cytochrome b-c1 complex, complex III, CIII) and cytochrome c oxidase (complex IV, CIV), that cooperate to transfer electrons derived from NADH and succinate to molecular oxygen, creating an electrochemical gradient over the inner membrane that drives transmembrane transport and the ATP synthase. Cytochrome c oxidase is the component of the respiratory chain that catalyzes the reduction of oxygen to water. Electrons originating from reduced cytochrome c in the intermembrane space (IMS) are transferred via the dinuclear copper A center (CU(A)) of subunit 2 and heme A of subunit 1 to the active site in subunit 1, a binuclear center (BNC) formed by heme A3 and copper B (CU(B)). The BNC reduces molecular oxygen to 2 water molecules using 4 electrons from cytochrome c in the IMS and 4 protons from the mitochondrial matrix. The polypeptide is Cytochrome c oxidase subunit 1 (COI) (Plasmodium berghei).